The chain runs to 391 residues: Succinate--CoA ligase [ADP-forming] subunit beta (391 aa).

In terms of domain architecture, ATP-grasp spans 9 to 248; sequence KDILRKFGVS…TGEEDPFEVE (240 aa). ATP contacts are provided by residues K50, 57-59, E103, M106, and E111; that span reads GRG. The Mg(2+) site is built by N203 and D217. Residues N268 and 325-327 each bind substrate; that span reads GIV.

It belongs to the succinate/malate CoA ligase beta subunit family. In terms of assembly, heterotetramer of two alpha and two beta subunits. It depends on Mg(2+) as a cofactor.

It carries out the reaction succinate + ATP + CoA = succinyl-CoA + ADP + phosphate. The enzyme catalyses GTP + succinate + CoA = succinyl-CoA + GDP + phosphate. Its pathway is carbohydrate metabolism; tricarboxylic acid cycle; succinate from succinyl-CoA (ligase route): step 1/1. Succinyl-CoA synthetase functions in the citric acid cycle (TCA), coupling the hydrolysis of succinyl-CoA to the synthesis of either ATP or GTP and thus represents the only step of substrate-level phosphorylation in the TCA. The beta subunit provides nucleotide specificity of the enzyme and binds the substrate succinate, while the binding sites for coenzyme A and phosphate are found in the alpha subunit. The chain is Succinate--CoA ligase [ADP-forming] subunit beta from Chlorobium phaeobacteroides (strain BS1).